The chain runs to 703 residues: Phosphoribosylformylglycinamidine synthase subunit PurL (703 aa).

The active site involves His36. 2 residues coordinate ATP: Tyr39 and Lys80. Glu82 serves as a coordination point for Mg(2+). Substrate is bound by residues 83–86 (SHNH) and Arg105. His84 acts as the Proton acceptor in catalysis. A Mg(2+)-binding site is contributed by Asp106. Gln226 lines the substrate pocket. Asp252 lines the Mg(2+) pocket. 294-296 (ETQ) provides a ligand contact to substrate. Asp468 and Gly505 together coordinate ATP. A substrate-binding site is contributed by Ser508.

It belongs to the FGAMS family. Monomer. Part of the FGAM synthase complex composed of 1 PurL, 1 PurQ and 2 PurS subunits.

The protein resides in the cytoplasm. The catalysed reaction is N(2)-formyl-N(1)-(5-phospho-beta-D-ribosyl)glycinamide + L-glutamine + ATP + H2O = 2-formamido-N(1)-(5-O-phospho-beta-D-ribosyl)acetamidine + L-glutamate + ADP + phosphate + H(+). It participates in purine metabolism; IMP biosynthesis via de novo pathway; 5-amino-1-(5-phospho-D-ribosyl)imidazole from N(2)-formyl-N(1)-(5-phospho-D-ribosyl)glycinamide: step 1/2. In terms of biological role, part of the phosphoribosylformylglycinamidine synthase complex involved in the purines biosynthetic pathway. Catalyzes the ATP-dependent conversion of formylglycinamide ribonucleotide (FGAR) and glutamine to yield formylglycinamidine ribonucleotide (FGAM) and glutamate. The FGAM synthase complex is composed of three subunits. PurQ produces an ammonia molecule by converting glutamine to glutamate. PurL transfers the ammonia molecule to FGAR to form FGAM in an ATP-dependent manner. PurS interacts with PurQ and PurL and is thought to assist in the transfer of the ammonia molecule from PurQ to PurL. The polypeptide is Phosphoribosylformylglycinamidine synthase subunit PurL (Sulfurisphaera tokodaii (strain DSM 16993 / JCM 10545 / NBRC 100140 / 7) (Sulfolobus tokodaii)).